The chain runs to 207 residues: Dephospho-CoA kinase (207 aa).

The region spanning 4–203 (VIGLTGGIAS…EEGYIEKPNY (200 aa)) is the DPCK domain. ATP is bound at residue 12-17 (ASGKST).

The protein belongs to the CoaE family.

Its subcellular location is the cytoplasm. The enzyme catalyses 3'-dephospho-CoA + ATP = ADP + CoA + H(+). It functions in the pathway cofactor biosynthesis; coenzyme A biosynthesis; CoA from (R)-pantothenate: step 5/5. In terms of biological role, catalyzes the phosphorylation of the 3'-hydroxyl group of dephosphocoenzyme A to form coenzyme A. This Staphylococcus aureus (strain MRSA252) protein is Dephospho-CoA kinase.